The chain runs to 100 residues: Large ribosomal subunit protein uL23 (100 aa).

Belongs to the universal ribosomal protein uL23 family. In terms of assembly, part of the 50S ribosomal subunit. Contacts protein L29, and trigger factor when it is bound to the ribosome.

In terms of biological role, one of the early assembly proteins it binds 23S rRNA. One of the proteins that surrounds the polypeptide exit tunnel on the outside of the ribosome. Forms the main docking site for trigger factor binding to the ribosome. The protein is Large ribosomal subunit protein uL23 of Sodalis glossinidius (strain morsitans).